Here is a 377-residue protein sequence, read N- to C-terminus: Dehydrogenase/reductase SDR family member 13 (377 aa).

The N-terminal stretch at 1–25 (MEALLLGVGLLLGAYVLVYYNLVKA) is a signal peptide. 2 residues coordinate NAD(+): S46 and I48. Position 170 (S170) interacts with substrate. Residues Y197, K201, and S232 each coordinate NAD(+). The active-site Proton acceptor is the Y197. Residues 310–363 (LAGLGPGEDAESDEDSQPEDPGTPSSPSSPHPEEPTVSELYPSPQSSTDRSTVT) form a disordered region. Residues 317 to 327 (EDAESDEDSQP) are compositionally biased toward acidic residues. Residues 328-337 (EDPGTPSSPS) are compositionally biased toward low complexity. Polar residues predominate over residues 352-363 (SPQSSTDRSTVT).

Belongs to the short-chain dehydrogenases/reductases (SDR) family.

Its subcellular location is the secreted. Functionally, putative oxidoreductase. This is Dehydrogenase/reductase SDR family member 13 (DHRS13) from Bos taurus (Bovine).